Reading from the N-terminus, the 109-residue chain is Ribonuclease (109 aa).

The Proton acceptor role is filled by glutamate 72. Catalysis depends on histidine 101, which acts as the Proton donor.

The protein belongs to the ribonuclease N1/T1 family.

It is found in the secreted. Its function is as follows. Hydrolyzes phosphodiester bonds in RNA, poly- and oligoribonucleotides resulting in 3'-nucleoside monophosphates via 2',3'-cyclophosphate intermediates. This Heyndrickxia coagulans (Weizmannia coagulans) protein is Ribonuclease.